We begin with the raw amino-acid sequence, 487 residues long: WAS/WASL-interacting protein family member 1 (487 aa).

A compositionally biased stretch (pro residues) spans 1-14 (MPVPPPPAPPPPPT). A disordered region spans residues 1–487 (MPVPPPPAPP…GAPPLPPIPR (487 aa)). A compositionally biased stretch (polar residues) spans 21-31 (EKPSLNKTEQA). The WH2 domain maps to 32–49 (GRNALLSDISKGKKLKKT). Arg33 carries the post-translational modification Asymmetric dimethylarginine. Positions 45-48 (KLKK) are binds actin. Residues 64 to 100 (GAGGGYGGGSGGGGGGGSSGGGGNFGGGGPPGLGGLF) show a composition bias toward gly residues. Omega-N-methylarginine is present on residues Arg121 and Arg130. Residues 136–147 (PFSSPSGPGRFP) are compositionally biased toward low complexity. At Ser138 the chain carries Phosphoserine. 2 stretches are compositionally biased toward pro residues: residues 157–170 (PPEPPRNRMPPPRP) and 178–190 (SLPPPVPNTPRPI). Ser222 is modified (phosphoserine). 3 stretches are compositionally biased toward pro residues: residues 234-243 (FPRPPLPPTP), 269-285 (VPPPPSQNSKPPVPSTP), and 293-309 (APPPPPPSRPGPPPLPP). Position 324 is a phosphoserine (Ser324). The segment covering 328–355 (PTPPLPSPGRSGPLPPPPTERPPPPVRD) has biased composition (pro residues). Phosphothreonine is present on Thr329. Ser334 is subject to Phosphoserine. XRSGPXPPXP motif repeat units lie at residues 336–345 (GRSGPLPPPP), 358–367 (GRSGPLPPPP), and 394–403 (PRSGPRPPLP). The segment covering 397–418 (GPRPPLPPDRPGAGAPPPPPPS) has biased composition (pro residues). Over residues 419 to 428 (TSVRNGFQDS) the composition is skewed to polar residues. Over residues 464 to 478 (ARSESRSGSNRRERG) the composition is skewed to basic and acidic residues.

Belongs to the verprolin family. As to quaternary structure, binds to WAS within the N-terminal region, at a site distinct from the CDC42-binding site. Binds profilin and actin. Interacts with DBNL. Binds to WASL. Interacts with DBNL. Interacts with FNBP1L (via the SH3 domain). In terms of tissue distribution, isoforms were differentially expressed. One isoform was ubiquitously expressed, another was muscle-specific and another was expressed in the liver, heart and testis.

The protein localises to the cytoplasmic vesicle. Its subcellular location is the cytoplasm. It localises to the cytoskeleton. The protein resides in the cell projection. It is found in the ruffle. Functionally, plays a role in the reorganization of the actin cytoskeleton. Contributes with NCK1 and GRB2 in the recruitment and activation of WASL. Plays a role in the formation of cell ruffles. May participate in regulating the subcellular localization of WASL, resulting in the disassembly of stress fibers in favor of filopodia formation. This Rattus norvegicus (Rat) protein is WAS/WASL-interacting protein family member 1 (Wipf1).